The sequence spans 767 residues: 5-methyltetrahydropteroyltriglutamate--homocysteine methyltransferase (767 aa).

5-methyltetrahydropteroyltri-L-glutamate-binding positions include 17–20 (RELK) and Lys117. L-homocysteine-binding positions include 441–443 (IGS) and Glu494. L-methionine is bound by residues 441 to 443 (IGS) and Glu494. 5-methyltetrahydropteroyltri-L-glutamate-binding positions include 525–526 (RC) and Trp571. Residue Asp609 coordinates L-homocysteine. Asp609 provides a ligand contact to L-methionine. A 5-methyltetrahydropteroyltri-L-glutamate-binding site is contributed by Glu615. His652, Cys654, and Glu676 together coordinate Zn(2+). The Proton donor role is filled by His705. Cys737 serves as a coordination point for Zn(2+).

The protein belongs to the vitamin-B12 independent methionine synthase family. The cofactor is Zn(2+).

It catalyses the reaction 5-methyltetrahydropteroyltri-L-glutamate + L-homocysteine = tetrahydropteroyltri-L-glutamate + L-methionine. It participates in amino-acid biosynthesis; L-methionine biosynthesis via de novo pathway; L-methionine from L-homocysteine (MetE route): step 1/1. Catalyzes the transfer of a methyl group from 5-methyltetrahydrofolate to homocysteine resulting in methionine formation. The polypeptide is 5-methyltetrahydropteroyltriglutamate--homocysteine methyltransferase (Bifidobacterium longum subsp. infantis (strain ATCC 15697 / DSM 20088 / JCM 1222 / NCTC 11817 / S12)).